A 631-amino-acid chain; its full sequence is Phosphomethylpyrimidine synthase (631 aa).

Residues asparagine 239, methionine 268, tyrosine 297, histidine 333, 353–355, 394–397, and glutamate 433 each bind substrate; these read SRG and DGLR. Zn(2+) is bound at residue histidine 437. Tyrosine 460 contributes to the substrate binding site. Histidine 501 is a binding site for Zn(2+). Residues cysteine 581, cysteine 584, and cysteine 589 each contribute to the [4Fe-4S] cluster site.

This sequence belongs to the ThiC family. As to quaternary structure, homodimer. Requires [4Fe-4S] cluster as cofactor.

The catalysed reaction is 5-amino-1-(5-phospho-beta-D-ribosyl)imidazole + S-adenosyl-L-methionine = 4-amino-2-methyl-5-(phosphooxymethyl)pyrimidine + CO + 5'-deoxyadenosine + formate + L-methionine + 3 H(+). It participates in cofactor biosynthesis; thiamine diphosphate biosynthesis. Functionally, catalyzes the synthesis of the hydroxymethylpyrimidine phosphate (HMP-P) moiety of thiamine from aminoimidazole ribotide (AIR) in a radical S-adenosyl-L-methionine (SAM)-dependent reaction. This chain is Phosphomethylpyrimidine synthase, found in Escherichia coli O7:K1 (strain IAI39 / ExPEC).